Reading from the N-terminus, the 393-residue chain is MFSWLARMALFCLRPMRRYGRMNRDDDDDDDHDGDSSSSGDSLLWSRELERHSFGDFSIAVVQANEVIEDHSQVETGNGAVFVGVYDGHGGPEASRYISDHLFSHLMRVSRERSCISEEALRAAFSATEEGFLTLVRRTCGLKPLIAAVGSCCLVGVIWKGTLLIANVGDSRAVLGSMGSNNNRSNKIVAEQLTSDHNAALEEVRQELRSLHPDDSHIVVLKHGVWRIKGIIQVSRSIGDAYLKRPEFSLDPSFPRFHLAEELQRPVLSAEPCVYTRVLQTSDKFVIFASDGLWEQMTNQQAVEIVNKHPRPGIARRLVRRAITIAAKKREMNYDDLKKVERGVRRFFHDDITVVVIFIDNELLMVEKATVPELSIKGFSHTVGPSKFSIFLS.

Residues 56-359 (DFSIAVVQAN…DDITVVVIFI (304 aa)) form the PPM-type phosphatase domain. 4 residues coordinate Mn(2+): D87, G88, D291, and D350.

The protein belongs to the PP2C family. Mg(2+) is required as a cofactor. Mn(2+) serves as cofactor.

The catalysed reaction is O-phospho-L-seryl-[protein] + H2O = L-seryl-[protein] + phosphate. The enzyme catalyses O-phospho-L-threonyl-[protein] + H2O = L-threonyl-[protein] + phosphate. Functionally, may dephosphorylate and repress plasma membrane H(+)-ATPases (PM H(+)-ATPases, e.g. AHA1 and AHA2), thus influencing negatively plant growth and fitness. The chain is Probable protein phosphatase 2C 68 from Arabidopsis thaliana (Mouse-ear cress).